The primary structure comprises 332 residues: Formamidase (332 aa).

Residues 14-259 (FLTALIQYPV…WEIVTAEVYP (246 aa)) enclose the CN hydrolase domain. E60 acts as the Proton acceptor in catalysis. Residue K132 is the Proton donor of the active site. The active-site Nucleophile is the C165.

The protein belongs to the carbon-nitrogen hydrolase superfamily. Aliphatic amidase family.

It carries out the reaction formamide + H2O = formate + NH4(+). In terms of biological role, is an aliphatic amidase with a restricted substrate specificity, as it only hydrolyzes formamide. This Bacillus cereus (strain G9842) protein is Formamidase.